The chain runs to 169 residues: Ribosome maturation factor RimM (169 aa).

Residues 97–169 (EDEYYWADLV…TITADWGLDY (73 aa)) enclose the PRC barrel domain.

It belongs to the RimM family. As to quaternary structure, binds ribosomal protein uS19.

It is found in the cytoplasm. Functionally, an accessory protein needed during the final step in the assembly of 30S ribosomal subunit, possibly for assembly of the head region. Essential for efficient processing of 16S rRNA. May be needed both before and after RbfA during the maturation of 16S rRNA. It has affinity for free ribosomal 30S subunits but not for 70S ribosomes. This is Ribosome maturation factor RimM from Neisseria gonorrhoeae (strain ATCC 700825 / FA 1090).